The sequence spans 138 residues: ATP synthase epsilon chain (138 aa).

Positions 89–114 are enriched in basic and acidic residues; the sequence is KDTAQQEWNEAQKRLDEASKSGDRQK. Residues 89 to 117 are disordered; that stretch reads KDTAQQEWNEAQKRLDEASKSGDRQKQIQ.

Belongs to the ATPase epsilon chain family. In terms of assembly, F-type ATPases have 2 components, CF(1) - the catalytic core - and CF(0) - the membrane proton channel. CF(1) has five subunits: alpha(3), beta(3), gamma(1), delta(1), epsilon(1). CF(0) has three main subunits: a, b and c.

Its subcellular location is the cellular thylakoid membrane. Produces ATP from ADP in the presence of a proton gradient across the membrane. This is ATP synthase epsilon chain from Gloeothece citriformis (strain PCC 7424) (Cyanothece sp. (strain PCC 7424)).